The chain runs to 827 residues: Glycerol-3-phosphate acyltransferase (827 aa).

The HXXXXD motif motif lies at 325 to 330 (CHRSHM).

It belongs to the GPAT/DAPAT family.

It localises to the cell inner membrane. It carries out the reaction sn-glycerol 3-phosphate + an acyl-CoA = a 1-acyl-sn-glycero-3-phosphate + CoA. It participates in phospholipid metabolism; CDP-diacylglycerol biosynthesis; CDP-diacylglycerol from sn-glycerol 3-phosphate: step 1/3. The sequence is that of Glycerol-3-phosphate acyltransferase from Shigella sonnei (strain Ss046).